The chain runs to 730 residues: Neuroligin-like protein glit-1 (730 aa).

The first 18 residues, methionine 1 to serine 18, serve as a signal peptide directing secretion. Residues glutamine 19–glycine 663 are Extracellular-facing. Asparagine 103, asparagine 320, asparagine 445, asparagine 512, asparagine 557, asparagine 564, and asparagine 604 each carry an N-linked (GlcNAc...) asparagine glycan. A helical membrane pass occupies residues valine 664–tryptophan 684. Topologically, residues glycine 685–leucine 730 are cytoplasmic.

The protein belongs to the type-B carboxylesterase/lipase family. Expressed in the pharynx, intestine, and in several cells in the head including dopaminergic neurons.

The protein resides in the cell membrane. Its function is as follows. Probable neuronal cell surface protein thought to be involved in cell-cell-interactions. Confers protection against oxidative stress. Plays a role in protecting dopaminergic neurons against oxidative stress-induced neurodegeneration. This is Neuroligin-like protein glit-1 from Caenorhabditis elegans.